The sequence spans 230 residues: Ribonuclease 3 (230 aa).

In terms of domain architecture, RNase III spans 5 to 125; sequence YSRFYNILGY…VIGAIYLDSD (121 aa). A Mg(2+)-binding site is contributed by E40. D44 is a catalytic residue. Positions 111 and 114 each coordinate Mg(2+). The active site involves E114. The 71-residue stretch at 153–223 folds into the DRBM domain; that stretch reads DSKSKLQEIL…AEKMIEMLSQ (71 aa).

It belongs to the ribonuclease III family. In terms of assembly, homodimer. It depends on Mg(2+) as a cofactor.

Its subcellular location is the cytoplasm. It carries out the reaction Endonucleolytic cleavage to 5'-phosphomonoester.. Its function is as follows. Digests double-stranded RNA. Involved in the processing of primary rRNA transcript to yield the immediate precursors to the large and small rRNAs (23S and 16S). Processes some mRNAs, and tRNAs when they are encoded in the rRNA operon. Processes pre-crRNA and tracrRNA of type II CRISPR loci if present in the organism. This is Ribonuclease 3 from Francisella tularensis subsp. holarctica (strain OSU18).